The following is a 155-amino-acid chain: uncharacterized protein (155 aa).

Residues 56-79 (GEKRPTHRRPYRRTKPYPKRPSML) form a disordered region. Basic residues predominate over residues 60–73 (PTHRRPYRRTKPYP).

This is an uncharacterized protein from Sinorhizobium fredii (strain NBRC 101917 / NGR234).